The sequence spans 226 residues: Transcriptional regulatory protein DpiA (226 aa).

Positions 6–122 (TLLIVEDETP…RLGQTLTRFR (117 aa)) constitute a Response regulatory domain. Residue Asp57 is modified to 4-aspartylphosphate. A DNA-binding region (H-T-H motif) is located at residues 180–199 (AETVAQALTISRTTARRYLE).

In terms of processing, phosphorylated and activated by DpiB.

The protein resides in the cytoplasm. In terms of biological role, member of the two-component regulatory system DpiA/DpiB, which is essential for expression of citrate-specific fermentation genes and genes involved in plasmid inheritance. Could be involved in response to both the presence of citrate and external redox conditions. The sequence is that of Transcriptional regulatory protein DpiA (dpiA) from Escherichia coli O157:H7.